Here is a 685-residue protein sequence, read N- to C-terminus: Sulfite reductase [ferredoxin], chloroplastic (685 aa).

The transit peptide at 1-51 directs the protein to the chloroplast; the sequence is MTTSFAAAALRDPKLQIPNYHGLRSSSAASSLSRNALSVPSSTRSSSLIRA. Residues Cys-495, Cys-501, Cys-541, and Cys-545 each contribute to the [4Fe-4S] cluster site. Residue Cys-545 participates in siroheme binding.

The protein belongs to the nitrite and sulfite reductase 4Fe-4S domain family. As to quaternary structure, monomer. Interacts with ferredoxin. Requires siroheme as cofactor. [4Fe-4S] cluster is required as a cofactor. In terms of processing, phosphorylated; this phosphorylation reduces DNA-binding. As to expression, expressed in leaves, stems, and roots.

The protein localises to the plastid. The protein resides in the chloroplast stroma. It is found in the chloroplast nucleoid. It localises to the plastid stroma. It carries out the reaction hydrogen sulfide + 6 oxidized [2Fe-2S]-[ferredoxin] + 3 H2O = sulfite + 6 reduced [2Fe-2S]-[ferredoxin] + 7 H(+). Its function is as follows. Essential protein with sulfite reductase activity required in assimilatory sulfate reduction pathway during both primary and secondary metabolism and thus involved in development and growth. Functionally, DNA-binding protein that binds to both double-stranded and single-stranded DNA without significant sequence specificity to reversibly repress the transcriptional activity of chloroplast nucleoids by promoting DNA compaction and possibly regulate DNA replication. This chain is Sulfite reductase [ferredoxin], chloroplastic (SIR), found in Pisum sativum (Garden pea).